The primary structure comprises 252 residues: Fatty acid elongase 4 (252 aa).

Residues 25–45 traverse the membrane as a helical segment; that stretch reads LVSWHALVLGHLLYLFVVFVM. N-linked (GlcNAc...) asparagine glycosylation occurs at Asn-56. Residues 60-80 traverse the membrane as a helical segment; sequence VLVVYNVLQICLSAAMAINLS. N-linked (GlcNAc...) asparagine glycosylation occurs at Asn-89. 5 helical membrane-spanning segments follow: residues 100–120, 127–147, 150–170, 187–207, and 214–234; these read FWMFVHYCSKYIDMLDTVFIL, QLSFLHVYHHCTIGLIWGILL, GLANGTAFFGTWINSSVHFLM, FLLTKIQMLQFSLCILHAILV, and FTLGWNLLQLLYNASLLVLFL. The HxxHH motif signature appears at 132–136; sequence HVYHH. The active-site Nucleophile is the His-135.

Belongs to the ELO family.

Its subcellular location is the membrane. It carries out the reaction (5Z,8Z,11Z,14Z)-eicosatetraenoyl-CoA + malonyl-CoA + H(+) = (7Z,10Z,13Z,16Z)-3-oxodocosatetraenoyl-CoA + CO2 + CoA. It functions in the pathway lipid metabolism; fatty acid biosynthesis. Involved in the synthesis of fatty acids. Elongates arachidonate and other C20 polyunsaturated fatty acids (PUFAs) with a preference for n-6 PUFAs. Not involved in fatty acid synthesis up to C18. The sequence is that of Fatty acid elongase 4 from Trypanosoma brucei brucei (strain 927/4 GUTat10.1).